The primary structure comprises 489 residues: Rhamnulokinase (489 aa).

Residue 13–17 coordinates ATP; it reads ASSGR. Cys-68 and Cys-222 are disulfide-bonded. Residues Gly-83 and 236–238 each bind substrate; that span reads HDT. Asp-237 acts as the Proton acceptor in catalysis. Thr-259 provides a ligand contact to ATP. Asn-296 serves as a coordination point for substrate. Gln-304 is a binding site for ATP. The cysteines at positions 353 and 370 are disulfide-linked. Gly-402 serves as a coordination point for ATP. Cys-413 and Cys-417 are joined by a disulfide.

This sequence belongs to the rhamnulokinase family. Monomer. It depends on Mg(2+) as a cofactor.

The enzyme catalyses L-rhamnulose + ATP = L-rhamnulose 1-phosphate + ADP + H(+). Its pathway is carbohydrate degradation; L-rhamnose degradation; glycerone phosphate from L-rhamnose: step 2/3. In terms of biological role, involved in the catabolism of L-rhamnose (6-deoxy-L-mannose). Catalyzes the transfer of the gamma-phosphate group from ATP to the 1-hydroxyl group of L-rhamnulose to yield L-rhamnulose 1-phosphate. This is Rhamnulokinase from Escherichia coli O139:H28 (strain E24377A / ETEC).